A 256-amino-acid chain; its full sequence is Enolase-phosphatase E1 (256 aa).

Mg(2+) is bound by residues aspartate 14 and glutamate 16. Residues 142–143 and lysine 176 contribute to the substrate site; that span reads SS. Aspartate 201 contributes to the Mg(2+) binding site.

This sequence belongs to the HAD-like hydrolase superfamily. MasA/MtnC family. As to quaternary structure, monomer. Mg(2+) serves as cofactor.

It is found in the cytoplasm. It localises to the nucleus. The catalysed reaction is 5-methylsulfanyl-2,3-dioxopentyl phosphate + H2O = 1,2-dihydroxy-5-(methylsulfanyl)pent-1-en-3-one + phosphate. The protein operates within amino-acid biosynthesis; L-methionine biosynthesis via salvage pathway; L-methionine from S-methyl-5-thio-alpha-D-ribose 1-phosphate: step 3/6. It functions in the pathway amino-acid biosynthesis; L-methionine biosynthesis via salvage pathway; L-methionine from S-methyl-5-thio-alpha-D-ribose 1-phosphate: step 4/6. Functionally, bifunctional enzyme that catalyzes the enolization of 2,3-diketo-5-methylthiopentyl-1-phosphate (DK-MTP-1-P) into the intermediate 2-hydroxy-3-keto-5-methylthiopentenyl-1-phosphate (HK-MTPenyl-1-P), which is then dephosphorylated to form the acireductone 1,2-dihydroxy-3-keto-5-methylthiopentene (DHK-MTPene). This is Enolase-phosphatase E1 from Drosophila simulans (Fruit fly).